We begin with the raw amino-acid sequence, 333 residues long: Fe-S cluster assembly protein dre2 (333 aa).

The tract at residues 1 to 29 is disordered; the sequence is MSPITLDLTSDFNPANTTGAGSSSSQPRT. Over residues 7–28 the composition is skewed to polar residues; that stretch reads DLTSDFNPANTTGAGSSSSQPR. The segment at 23–158 is N-terminal SAM-like domain; that stretch reads SSSQPRTLLV…KPDYAEEEAV (136 aa). The linker stretch occupies residues 159–225; the sequence is PLRFGLKRKT…EDTLLTEADL (67 aa). 4 residues coordinate [2Fe-2S] cluster: C235, C246, C249, and C251. Residues 235-251 are fe-S binding site A; sequence CQPKPGKKRRACKDCTC. C296, C299, C307, and C310 together coordinate [4Fe-4S] cluster. Short sequence motifs (cx2C motif) lie at residues 296 to 299 and 307 to 310; these read CGSC and CAGC. Residues 296–310 are fe-S binding site B; sequence CGSCALGDAFRCAGC.

It belongs to the anamorsin family. As to quaternary structure, monomer. Interacts with tah18. Interacts with mia40. [2Fe-2S] cluster is required as a cofactor. It depends on [4Fe-4S] cluster as a cofactor.

The protein resides in the cytoplasm. The protein localises to the mitochondrion intermembrane space. Its function is as follows. Component of the cytosolic iron-sulfur (Fe-S) protein assembly (CIA) machinery required for the maturation of extramitochondrial Fe-S proteins. Part of an electron transfer chain functioning in an early step of cytosolic Fe-S biogenesis, facilitating the de novo assembly of a [4Fe-4S] cluster on the scaffold complex cfd1-nbp35. Electrons are transferred to dre2 from NADPH via the FAD- and FMN-containing protein tah18. Tah18-dre2 are also required for the assembly of the diferric tyrosyl radical cofactor of ribonucleotide reductase (RNR), probably by providing electrons for reduction during radical cofactor maturation in the catalytic small subunit rnr2. This is Fe-S cluster assembly protein dre2 from Neurospora crassa (strain ATCC 24698 / 74-OR23-1A / CBS 708.71 / DSM 1257 / FGSC 987).